We begin with the raw amino-acid sequence, 371 residues long: 3-dehydroquinate synthase (371 aa).

Residues 70–75 (DAEDGK), 104–108 (GAVTD), 128–129 (TT), Lys-141, and Lys-150 contribute to the NAD(+) site. Zn(2+)-binding residues include Glu-183, His-246, and His-262.

Belongs to the sugar phosphate cyclases superfamily. Dehydroquinate synthase family. Requires Co(2+) as cofactor. It depends on Zn(2+) as a cofactor. NAD(+) serves as cofactor.

Its subcellular location is the cytoplasm. It catalyses the reaction 7-phospho-2-dehydro-3-deoxy-D-arabino-heptonate = 3-dehydroquinate + phosphate. It functions in the pathway metabolic intermediate biosynthesis; chorismate biosynthesis; chorismate from D-erythrose 4-phosphate and phosphoenolpyruvate: step 2/7. Its function is as follows. Catalyzes the conversion of 3-deoxy-D-arabino-heptulosonate 7-phosphate (DAHP) to dehydroquinate (DHQ). In Saccharopolyspora erythraea (strain ATCC 11635 / DSM 40517 / JCM 4748 / NBRC 13426 / NCIMB 8594 / NRRL 2338), this protein is 3-dehydroquinate synthase.